The chain runs to 442 residues: Betaine reductase complex component B subunit alpha (442 aa).

Heterotetramer of two alpha and two beta subunits. Component of the betaine reductase complex, together with components A and C. PB is substrate specific.

The enzyme catalyses acetyl phosphate + trimethylamine + [thioredoxin]-disulfide + H2O = glycine betaine + [thioredoxin]-dithiol + phosphate + H(+). Functionally, in the first step of betaine reductase, the substrate is bound to component PB via a Schiff base intermediate. Then the PB-activated substrate is nucleophilically attacked by the selenol anion of component PA to transform it to a carboxymethylated selenoether and the respective amine. By action of component PC, acetyl phosphate is formed, leaving component PA in its oxidized state. Finally component PA becomes reduced by the thioredoxin system to start a new catalytic cycle of reductive deamination. The polypeptide is Betaine reductase complex component B subunit alpha (grdI) (Peptoclostridium acidaminophilum (Eubacterium acidaminophilum)).